Reading from the N-terminus, the 316-residue chain is 4-diphosphocytidyl-2-C-methyl-D-erythritol kinase (316 aa).

Residue K32 is part of the active site. An ATP-binding site is contributed by 126–136; the sequence is PVGAGLGGGSA. D168 is a catalytic residue.

The protein belongs to the GHMP kinase family. IspE subfamily.

It catalyses the reaction 4-CDP-2-C-methyl-D-erythritol + ATP = 4-CDP-2-C-methyl-D-erythritol 2-phosphate + ADP + H(+). It participates in isoprenoid biosynthesis; isopentenyl diphosphate biosynthesis via DXP pathway; isopentenyl diphosphate from 1-deoxy-D-xylulose 5-phosphate: step 3/6. Functionally, catalyzes the phosphorylation of the position 2 hydroxy group of 4-diphosphocytidyl-2C-methyl-D-erythritol. This is 4-diphosphocytidyl-2-C-methyl-D-erythritol kinase from Bifidobacterium longum (strain DJO10A).